A 455-amino-acid polypeptide reads, in one-letter code: MSFSDQLGFTFSAPQRRIWQVRDIVSAVRAALEREYADVWVEGEISNFRPADSGHLYFSLKDESTQLRIVMFRSQARLLKFRPENGLKVIARGKVTLYEGRGELQLMAEYLEPQGAGALQIAFEQLKAKLQAEGLFARERKKPIPALPKKIGVVTSPRGAVIQDILNVLRRRHNSVHVLIFPAQVQGETAASEVASGVRYFNKAANVEVIIVARGGGSIEDLAAFNDEGLARSIATSTIPVISAVGHETDFTICDFVADLRAPTPSAAAELVIRSKQEVDERLTALSTHLARALRVRLLEYEKKLDRLARHGAFGGMQTAIARRQQRVDDLAFRLSVAQTNVFRQLHRRLDVASTRVRHHDLRSRFAAEHRELSARVEKLAATLRANLMRRRTRIERLAGQLQGLSPISILERGYALVFDAEGRLLKDARQVREGNTIRAQLALGQISAVVKKPE.

This sequence belongs to the XseA family. As to quaternary structure, heterooligomer composed of large and small subunits.

The protein resides in the cytoplasm. The catalysed reaction is Exonucleolytic cleavage in either 5'- to 3'- or 3'- to 5'-direction to yield nucleoside 5'-phosphates.. In terms of biological role, bidirectionally degrades single-stranded DNA into large acid-insoluble oligonucleotides, which are then degraded further into small acid-soluble oligonucleotides. This is Exodeoxyribonuclease 7 large subunit from Koribacter versatilis (strain Ellin345).